Here is a 161-residue protein sequence, read N- to C-terminus: Ribonuclease H (161 aa).

The RNase H type-1 domain occupies 3 to 144 (GLKQISIYTD…CDDLARQAAE (142 aa)). Mg(2+)-binding residues include aspartate 12, glutamate 50, aspartate 72, and aspartate 136. Residues 133–161 (ERCDDLARQAAEAKPSQEDSGYINQQAQA) are disordered. Positions 150–161 (EDSGYINQQAQA) are enriched in polar residues.

It belongs to the RNase H family. As to quaternary structure, monomer. Mg(2+) is required as a cofactor.

It is found in the cytoplasm. The catalysed reaction is Endonucleolytic cleavage to 5'-phosphomonoester.. Functionally, endonuclease that specifically degrades the RNA of RNA-DNA hybrids. The sequence is that of Ribonuclease H from Shewanella halifaxensis (strain HAW-EB4).